Here is a 566-residue protein sequence, read N- to C-terminus: Insulinoma-associated protein 2 (566 aa).

The segment at 1-20 (MPRGFLVKRTKRTGGLYRVR) is SNAG domain. A disordered region spans residues 32-117 (QGAPPFLEEA…PSPSPAKPAG (86 aa)). Over residues 103 to 113 (GPSPSPSPSPA) the composition is skewed to pro residues. A C2H2-type 1; atypical zinc finger spans residues 263 to 283 (FICQLCKEQYADPFALAQHRC). The C2H2-type 2 zinc-finger motif lies at 291–313 (YRCPECDKVFSCPANLASHRRWH). The tract at residues 310 to 418 (RRWHKPRPAA…RRVPVPGSTS (109 aa)) is disordered. Over residues 318 to 348 (AAANAATVSSADGKPPSSSSSSSRDSGAIAS) the composition is skewed to low complexity. Residues 352-369 (EGKENSRIERTADQHPQA) show a composition bias toward basic and acidic residues. C2H2-type zinc fingers lie at residues 426–448 (FVCP…LSTH), 470–492 (FACP…RLWH), and 525–548 (FSCK…NKCH).

In terms of tissue distribution, expressed in heart, liver, skeletal muscle, kidney and pancreas, and, to a lesser extent, in brain, lung and spleen. In the pancreas, expressed in islet cells, including insulin- and glucagon-producing alpha- and beta-cells, but not in acinar cells (at protein level). Detected in adrenal glands, particularly in the deeper layer of the cortex (at protein level).

It is found in the cytoplasm. The protein localises to the nucleus. Its function is as follows. May function as a growth suppressor or tumor suppressor in liver cells and in certain neurons. The polypeptide is Insulinoma-associated protein 2 (INSM2) (Homo sapiens (Human)).